Consider the following 280-residue polypeptide: MLKSIRTAEIILSALPYIQKFRDEIFVIKYGGAAQIDEKLKNNFARDIVLLQLVGIKAVIVHGGGKKINSFLERLNLKSEFIDGLRVTDKDAMEVVEMTLSGLINKEITSLLNKHGARAIGISGKDDNMLKAKSLDDGKYGFVGEITDVNENVILTIINDGLIPVIAPIAIGSEYETYNINADLCASAIASKLKARKVIFLSDIKGVLDKDEKLISKLNETSINELKNNGAISGGMIPKIDACLECIKSGVGAAHIIDGKIPHSLLLEIFTDEGIGSVIK.

Residues 64–65 (GG), R86, and N179 contribute to the substrate site.

Belongs to the acetylglutamate kinase family. ArgB subfamily.

It is found in the cytoplasm. It catalyses the reaction N-acetyl-L-glutamate + ATP = N-acetyl-L-glutamyl 5-phosphate + ADP. It participates in amino-acid biosynthesis; L-arginine biosynthesis; N(2)-acetyl-L-ornithine from L-glutamate: step 2/4. Functionally, catalyzes the ATP-dependent phosphorylation of N-acetyl-L-glutamate. The protein is Acetylglutamate kinase of Campylobacter fetus subsp. fetus (strain 82-40).